A 384-amino-acid chain; its full sequence is DNA replication and repair protein RecF (384 aa).

An ATP-binding site is contributed by 30–37 (GNNAQGKS).

Belongs to the RecF family.

The protein localises to the cytoplasm. In terms of biological role, the RecF protein is involved in DNA metabolism; it is required for DNA replication and normal SOS inducibility. RecF binds preferentially to single-stranded, linear DNA. It also seems to bind ATP. This Gloeothece citriformis (strain PCC 7424) (Cyanothece sp. (strain PCC 7424)) protein is DNA replication and repair protein RecF.